A 315-amino-acid polypeptide reads, in one-letter code: Olfactory receptor 3A2 (315 aa).

At 1–29 (MEPEAGTNRTAVAEFILLGLVQTEEMQPV) the chain is on the extracellular side. Asn8 carries N-linked (GlcNAc...) asparagine glycosylation. A helical membrane pass occupies residues 30–52 (VFVLFLFAYLVTIGGNLSILAAI). Over 53–60 (LVEPKLHA) the chain is Cytoplasmic. A helical membrane pass occupies residues 61–82 (PMYFFLGNLSVLDVGCITVTVP). Over 83–103 (AMLGRLLSHKSTISYDACLSQ) the chain is Extracellular. Residues Cys100 and Cys192 are joined by a disulfide bond. Residues 104-123 (LFFFHLLAGMDCFLLTAMAY) traverse the membrane as a helical segment. Over 124–143 (DRFLAICWPLTYSTRMSQTV) the chain is Cytoplasmic. A helical membrane pass occupies residues 144 to 161 (QRMLVAASWACAFTNALT). Topologically, residues 162-199 (HTVAMSTLNFCGPNEVNHFYCDLPQLFQLSCSSTQLNE) are extracellular. Residues 200–223 (LLLFAVGFIMAGTPLVLIITSYSH) form a helical membrane-spanning segment. The Cytoplasmic segment spans residues 224 to 240 (VAAAVLRIRSVEGWKKA). The chain crosses the membrane as a helical span at residues 241-264 (FSTCGSHLTVVCLFFGTGIFNYMR). At 265–275 (LGSEEASDKDK) the chain is on the extracellular side. The helical transmembrane segment at 276-295 (GVGVFNTVINPMLNPLIYSL) threads the bilayer. Over 296–315 (RNPDVQGALWRIFLGRRSLT) the chain is Cytoplasmic.

Belongs to the G-protein coupled receptor 1 family.

The protein resides in the cell membrane. Functionally, odorant receptor. In Pan troglodytes (Chimpanzee), this protein is Olfactory receptor 3A2 (OR3A2).